A 304-amino-acid polypeptide reads, in one-letter code: Beta-lactamase-like protein str6 (304 aa).

The protein belongs to the beta-lactamase family.

It functions in the pathway mycotoxin biosynthesis. Functionally, beta-lactamase-like protein; part of the gene cluster that mediates the biosynthesis of strobilurin A, an antifungal polyketide that contains a key beta-methoxyacrylate toxophore that targets the complex III of the mitochondrial electron transport chain. Strobilurin biosynthesis begins with construction of benzoyl CoA by step-wise elimination of ammonia from phenylalanine by the phenylalanine ammonia-lyase str11, oxygenation by str8 and retro-Claisen reaction to form benzoic acid, which is activated to its CoA thiolester benzoyl CoA by the dedicated CoA ligase str10. Benzoyl CoA forms the starter unit for the highly reducing polyketide synthase stpks1 that produces the polyketide prestrobilutin A. The FAD-dependent oxygenase str9 then catalyzes the key oxidative rearrangement responsible for the creation of the beta-methoxyacrylate toxophore. Str9 performs epoxidation of the 2,3 olefin of prestrobilutin A, followed by Meinwald rearrangement to furnish the aldehyde intermediate. Rapid enolization of the aldehyde intermediate would give the beta-methoxyacrylate skeleton and methylations catalyzed by str2 and str3 complete the synthesis and lead to the production of strobilurin A. The short-chain dehydrogenase stl2 and the dehydrogenase str4 play a role in the shunt pathway leading to the production of bolineol. The cluster encodes no obvious halogenase gene that could be involved in production of strobilurin B, nor any obvious dimethylallyl-transferase that could be involved in the production of strobilurin G. It is possible that unknown proteins encoded in, or near, the cluster (such as str1 or stl1) may form new classes of halogenases or dimethylally-transferases, or that the responsible genes are located elsewhere on the genome. Similarly, proteins encoded by str5/str6 hydrolases appear to have no chemical role in the biosynthesis of strobilurin A. Finally, no obvious self-resistance gene is found within the cluster. The protein is Beta-lactamase-like protein str6 of Strobilurus tenacellus.